We begin with the raw amino-acid sequence, 314 residues long: Acetyl-coenzyme A carboxylase carboxyl transferase subunit beta (314 aa).

A CoA carboxyltransferase N-terminal domain is found at 37–307; sequence LWQKCPACDT…MSLPSIDSEA (271 aa). 4 residues coordinate Zn(2+): cysteine 41, cysteine 44, cysteine 60, and cysteine 63. Residues 41–63 form a C4-type zinc finger; sequence CPACDTLTYTKDLQQNWQVCPSC.

Belongs to the AccD/PCCB family. In terms of assembly, acetyl-CoA carboxylase is a heterohexamer composed of biotin carboxyl carrier protein (AccB), biotin carboxylase (AccC) and two subunits each of ACCase subunit alpha (AccA) and ACCase subunit beta (AccD). The cofactor is Zn(2+).

It localises to the cytoplasm. It catalyses the reaction N(6)-carboxybiotinyl-L-lysyl-[protein] + acetyl-CoA = N(6)-biotinyl-L-lysyl-[protein] + malonyl-CoA. It functions in the pathway lipid metabolism; malonyl-CoA biosynthesis; malonyl-CoA from acetyl-CoA: step 1/1. Component of the acetyl coenzyme A carboxylase (ACC) complex. Biotin carboxylase (BC) catalyzes the carboxylation of biotin on its carrier protein (BCCP) and then the CO(2) group is transferred by the transcarboxylase to acetyl-CoA to form malonyl-CoA. This chain is Acetyl-coenzyme A carboxylase carboxyl transferase subunit beta, found in Synechococcus sp. (strain JA-2-3B'a(2-13)) (Cyanobacteria bacterium Yellowstone B-Prime).